Here is a 721-residue protein sequence, read N- to C-terminus: MTPIQKTATVGGKEVLLETGKVAKQAHGSVWVRLGDSIVLVTAVSAAEKKEGIDFFPLTVDYQEKLFAAGRVPGSFFRREGRPTEKETLTSRLVDRSCRPLFAEGYSNETQVIATVISFDQENDTDVLALTGASAALHISDIPFGGPIAGVRVARVGGQLVANPTLAQRADADLDVVMAASRDAIVMVEGGAQEVSEAVMIEALLFGQAAVQPLLDAQDALRAATGNKPRRAFDPPKNDVELRAKVKALTWEKVKEAYGRDEKHDRYGRLSEIKKELLQALKEEAAGDAAKLATIALREKEIKGYYEDVKYDYMRKMITDERRRIGGRGMADIRKITCEVGLLPRVHGSSLFTRGETQALVATTLGTAEDEQRVEMLTGMVFKKFMLHYNFPPFSVGEVKFLRSPGRREIGHGALAERALRAVMPPEDQFPYTVRVVSDIMESNGSSSMASVCGGCLSLMDAGVPIKAPVAGIAMGLIKEGEKIAILSDILGDEDHLGDMDFKVCGTAAGITSIQMDIKIGGVTREILEQALSQAAEGRKHILGEMAKALSAPRGSISAYAPRITTIKIRPERIKDIIGPGGKTIKDITARTGTSINIEDDGSVSIASPNQDKVEEAIKMIRGLTQEAEVGRIYMGTVRKIAEFGAFVEIFPGTDGLIHISELSDKRVKSVSDVLSEGEEVMVKVISVDRSGKIRLSRKEALADSAKKSEGTEPPKGEPAK.

Residues Asp-495 and Asp-501 each contribute to the Mg(2+) site. Positions 562–621 (PRITTIKIRPERIKDIIGPGGKTIKDITARTGTSINIEDDGSVSIASPNQDKVEEAIKMI) constitute a KH domain. The 69-residue stretch at 631–699 (GRIYMGTVRK…RSGKIRLSRK (69 aa)) folds into the S1 motif domain. A disordered region spans residues 699–721 (KEALADSAKKSEGTEPPKGEPAK).

The protein belongs to the polyribonucleotide nucleotidyltransferase family. Mg(2+) is required as a cofactor.

The protein resides in the cytoplasm. It catalyses the reaction RNA(n+1) + phosphate = RNA(n) + a ribonucleoside 5'-diphosphate. In terms of biological role, involved in mRNA degradation. Catalyzes the phosphorolysis of single-stranded polyribonucleotides processively in the 3'- to 5'-direction. In Anaeromyxobacter dehalogenans (strain 2CP-C), this protein is Polyribonucleotide nucleotidyltransferase.